The sequence spans 335 residues: Ferrochelatase (335 aa).

2 residues coordinate Fe cation: His-207 and Glu-288.

Belongs to the ferrochelatase family.

The protein resides in the cytoplasm. It catalyses the reaction heme b + 2 H(+) = protoporphyrin IX + Fe(2+). Its pathway is porphyrin-containing compound metabolism; protoheme biosynthesis; protoheme from protoporphyrin-IX: step 1/1. In terms of biological role, catalyzes the ferrous insertion into protoporphyrin IX. The chain is Ferrochelatase from Helicobacter pylori (strain J99 / ATCC 700824) (Campylobacter pylori J99).